The following is a 293-amino-acid chain: MDKKRYELNVQLAQMLKGGVIMDVTNVEQARIAEDAGAVAVMALERVPADIRAQGGVARMSDPSMIVEIKKSVSIPVMAKARIGHFVEAQILEALKIDYIDESEVLTPADEECHIDKTRFSIPFVCGARNLGEALRRIAEGAAMIRTKGEAGTGNVVEAVRHMRTMNREIRQLVGMPVEEVTVFAKSNGIPYELALQVRGLGRLPVVNFAAGGIATPADAALMMQLGCDGVFVGSGIFKSSNPDRRARAIVKATAYFNDAAKVLEASLDLGEAMPVLEIAQIPEDQILATRGW.

Aspartate 23 lines the D-ribose 5-phosphate pocket. Lysine 80 acts as the Schiff-base intermediate with D-ribose 5-phosphate in catalysis. Residue glycine 152 participates in D-ribose 5-phosphate binding. D-glyceraldehyde 3-phosphate is bound at residue arginine 164. D-ribose 5-phosphate-binding positions include glycine 213 and 234 to 235 (GS).

It belongs to the PdxS/SNZ family. In the presence of PdxT, forms a dodecamer of heterodimers.

The enzyme catalyses aldehydo-D-ribose 5-phosphate + D-glyceraldehyde 3-phosphate + L-glutamine = pyridoxal 5'-phosphate + L-glutamate + phosphate + 3 H2O + H(+). The protein operates within cofactor biosynthesis; pyridoxal 5'-phosphate biosynthesis. Its function is as follows. Catalyzes the formation of pyridoxal 5'-phosphate from ribose 5-phosphate (RBP), glyceraldehyde 3-phosphate (G3P) and ammonia. The ammonia is provided by the PdxT subunit. Can also use ribulose 5-phosphate and dihydroxyacetone phosphate as substrates, resulting from enzyme-catalyzed isomerization of RBP and G3P, respectively. The polypeptide is Pyridoxal 5'-phosphate synthase subunit PdxS (Syntrophus aciditrophicus (strain SB)).